Here is a 1370-residue protein sequence, read N- to C-terminus: DNA-directed RNA polymerase subunit beta (1370 aa).

This sequence belongs to the RNA polymerase beta chain family. The RNAP catalytic core consists of 2 alpha, 1 beta, 1 beta' and 1 omega subunit. When a sigma factor is associated with the core the holoenzyme is formed, which can initiate transcription.

It carries out the reaction RNA(n) + a ribonucleoside 5'-triphosphate = RNA(n+1) + diphosphate. DNA-dependent RNA polymerase catalyzes the transcription of DNA into RNA using the four ribonucleoside triphosphates as substrates. The protein is DNA-directed RNA polymerase subunit beta of Bordetella pertussis (strain Tohama I / ATCC BAA-589 / NCTC 13251).